Consider the following 182-residue polypeptide: Ribosome-recycling factor (182 aa).

The tract at residues 136–160 is disordered; sequence VKKSEKDGDLSEDQSRDEQETIQKE.

Belongs to the RRF family.

It is found in the cytoplasm. In terms of biological role, responsible for the release of ribosomes from messenger RNA at the termination of protein biosynthesis. May increase the efficiency of translation by recycling ribosomes from one round of translation to another. The chain is Ribosome-recycling factor from Prochlorococcus marinus (strain NATL2A).